A 214-amino-acid polypeptide reads, in one-letter code: Octanoyltransferase (214 aa).

The region spanning 32 to 207 is the BPL/LPL catalytic domain; it reads EDTLDEIWLV…NLLALLNHPP (176 aa). Residues 71–78, 138–140, and 151–153 each bind substrate; these read RGGQVTYH, SLG, and GLA. Residue Cys-169 is the Acyl-thioester intermediate of the active site.

It belongs to the LipB family.

The protein resides in the cytoplasm. The catalysed reaction is octanoyl-[ACP] + L-lysyl-[protein] = N(6)-octanoyl-L-lysyl-[protein] + holo-[ACP] + H(+). Its pathway is protein modification; protein lipoylation via endogenous pathway; protein N(6)-(lipoyl)lysine from octanoyl-[acyl-carrier-protein]: step 1/2. In terms of biological role, catalyzes the transfer of endogenously produced octanoic acid from octanoyl-acyl-carrier-protein onto the lipoyl domains of lipoate-dependent enzymes. Lipoyl-ACP can also act as a substrate although octanoyl-ACP is likely to be the physiological substrate. This Klebsiella pneumoniae subsp. pneumoniae (strain ATCC 700721 / MGH 78578) protein is Octanoyltransferase.